The chain runs to 146 residues: Hemoglobin subunit beta (146 aa).

The Globin domain maps to 2 to 146; sequence QWTAEEKQLI…VAHALARKYH (145 aa). Heme b-binding residues include His63 and His92.

The protein belongs to the globin family. As to quaternary structure, heterotetramer of two alpha chains and two beta chains. In terms of tissue distribution, red blood cells.

Its function is as follows. Involved in oxygen transport from the lung to the various peripheral tissues. This Passer montanus (Eurasian tree sparrow) protein is Hemoglobin subunit beta (HBB).